A 200-amino-acid polypeptide reads, in one-letter code: NADH-quinone oxidoreductase subunit C (200 aa).

Belongs to the complex I 30 kDa subunit family. NDH-1 is composed of 14 different subunits. Subunits NuoB, C, D, E, F, and G constitute the peripheral sector of the complex.

Its subcellular location is the cell inner membrane. The catalysed reaction is a quinone + NADH + 5 H(+)(in) = a quinol + NAD(+) + 4 H(+)(out). In terms of biological role, NDH-1 shuttles electrons from NADH, via FMN and iron-sulfur (Fe-S) centers, to quinones in the respiratory chain. The immediate electron acceptor for the enzyme in this species is believed to be ubiquinone. Couples the redox reaction to proton translocation (for every two electrons transferred, four hydrogen ions are translocated across the cytoplasmic membrane), and thus conserves the redox energy in a proton gradient. This chain is NADH-quinone oxidoreductase subunit C, found in Burkholderia cenocepacia (strain HI2424).